The following is a 227-amino-acid chain: 2,3-bisphosphoglycerate-dependent phosphoglycerate mutase (227 aa).

Substrate is bound by residues 8–15, 21–22, Arg58, 110–113, Lys121, 137–138, and 181–182; these read RHGKSVWN, TG, ERMY, RR, and GN. The active-site Tele-phosphohistidine intermediate is His9. Glu110 serves as the catalytic Proton donor/acceptor.

Belongs to the phosphoglycerate mutase family. BPG-dependent PGAM subfamily.

The catalysed reaction is (2R)-2-phosphoglycerate = (2R)-3-phosphoglycerate. It participates in carbohydrate degradation; glycolysis; pyruvate from D-glyceraldehyde 3-phosphate: step 3/5. Catalyzes the interconversion of 2-phosphoglycerate and 3-phosphoglycerate. The protein is 2,3-bisphosphoglycerate-dependent phosphoglycerate mutase of Chlamydia felis (strain Fe/C-56) (Chlamydophila felis).